The chain runs to 334 residues: L-lactate dehydrogenase B chain (334 aa).

Position 2 is an N-acetylalanine (alanine 2). Lysine 7 is subject to N6-acetyllysine. Position 31-53 (31-53 (QVGMACAISILGKSLADELALVD)) interacts with NAD(+). A Phosphoserine modification is found at serine 44. Lysine 58 carries the N6-acetyllysine modification. Residue arginine 100 coordinates NAD(+). A substrate-binding site is contributed by arginine 107. N6-acetyllysine is present on lysine 119. Asparagine 139 contributes to the NAD(+) binding site. Substrate-binding residues include asparagine 139 and arginine 170. Histidine 194 serves as the catalytic Proton acceptor. A Phosphotyrosine modification is found at tyrosine 240. Position 249 (threonine 249) interacts with substrate. The residue at position 329 (lysine 329) is an N6-acetyllysine.

The protein belongs to the LDH/MDH superfamily. LDH family. Homotetramer. Interacts with PTEN upstream reading frame protein MP31; the interaction leads to inhibition of mitochondrial lactate dehydrogenase activity, preventing conversion of lactate to pyruvate in mitochondria. In terms of tissue distribution, predominantly expressed in aerobic tissues such as cardiac muscle.

It localises to the cytoplasm. It is found in the mitochondrion inner membrane. It carries out the reaction (S)-lactate + NAD(+) = pyruvate + NADH + H(+). It participates in fermentation; pyruvate fermentation to lactate; (S)-lactate from pyruvate: step 1/1. Functionally, interconverts simultaneously and stereospecifically pyruvate and lactate with concomitant interconversion of NADH and NAD(+). The sequence is that of L-lactate dehydrogenase B chain (LDHB) from Homo sapiens (Human).